The primary structure comprises 657 residues: Glycogen debranching enzyme (657 aa).

D336 acts as the Nucleophile in catalysis. E371 (proton donor) is an active-site residue. Basic and acidic residues predominate over residues 458-467 (NEANGEENRD). Residues 458–479 (NEANGEENRDGTNNNYSNNHGK) are disordered.

This sequence belongs to the glycosyl hydrolase 13 family.

It catalyses the reaction Hydrolysis of (1-&gt;6)-alpha-D-glucosidic linkages to branches with degrees of polymerization of three or four glucose residues in limit dextrin.. It functions in the pathway glycan degradation; glycogen degradation. Its function is as follows. Removes maltotriose and maltotetraose chains that are attached by 1,6-alpha-linkage to the limit dextrin main chain, generating a debranched limit dextrin. This is Glycogen debranching enzyme from Shigella boydii serotype 18 (strain CDC 3083-94 / BS512).